The following is a 182-amino-acid chain: HGPRTase-like protein 1 (182 aa).

The protein belongs to the purine/pyrimidine phosphoribosyltransferase family. Archaeal HPRT subfamily.

Functionally, may catalyze a purine salvage reaction, the substrate is unknown. This chain is HGPRTase-like protein 1, found in Haloarcula marismortui (strain ATCC 43049 / DSM 3752 / JCM 8966 / VKM B-1809) (Halobacterium marismortui).